The primary structure comprises 114 residues: Pole-localizer protein TmaR (114 aa).

The stretch at 70–111 forms a coiled coil; it reads RDDYESRVDDYTIRNAELSKQRREASTKMKEQKKAHAELLKN. Positions 89–114 are disordered; it reads KQRREASTKMKEQKKAHAELLKNAEK.

It belongs to the pole-localizer TmaR family.

It localises to the cytoplasm. In terms of biological role, pole-localizer protein involved in the regulation of several cellular processes. The protein is Pole-localizer protein TmaR of Haemophilus influenzae (strain 86-028NP).